The following is a 516-amino-acid chain: Alstonine synthase (516 aa).

The helical transmembrane segment at 6–26 threads the bilayer; the sequence is NFSLTSPIFLLLSSLFLIILL. C453 is a binding site for heme.

The protein belongs to the cytochrome P450 family. Requires heme as cofactor. In terms of tissue distribution, highly expressed in stems. Expressed at low levels in roots.

It is found in the endoplasmic reticulum membrane. It catalyses the reaction tetrahydroalstonine + A + reduced [NADPH--hemoprotein reductase] + O2 = alstonine + AH2 + oxidized [NADPH--hemoprotein reductase] + 2 H2O + H(+). The enzyme catalyses ajmalicine + A + reduced [NADPH--hemoprotein reductase] + O2 = serpentine + AH2 + oxidized [NADPH--hemoprotein reductase] + 2 H2O + H(+). It participates in alkaloid biosynthesis. Its function is as follows. Involved in monoterpene indole alkaloids (MIAs) biosynthesis. Converts by aromatization the tetrahydro-beta-carboline alkaloids tetrahydroalstonine and ajmalicine to the corresponding beta-carboline alkaloids alstonine and serpentine, respectively. This is Alstonine synthase from Catharanthus roseus (Madagascar periwinkle).